Here is a 158-residue protein sequence, read N- to C-terminus: Phosphopantetheine adenylyltransferase (158 aa).

Serine 9 provides a ligand contact to substrate. Residues 9–10 (SF) and histidine 17 contribute to the ATP site. Positions 41, 73, and 87 each coordinate substrate. Residues 88-90 (GLR), glutamate 98, and 122-128 (NQNISSS) each bind ATP.

It belongs to the bacterial CoaD family. In terms of assembly, homohexamer. Requires Mg(2+) as cofactor.

The protein resides in the cytoplasm. The catalysed reaction is (R)-4'-phosphopantetheine + ATP + H(+) = 3'-dephospho-CoA + diphosphate. It functions in the pathway cofactor biosynthesis; coenzyme A biosynthesis; CoA from (R)-pantothenate: step 4/5. Functionally, reversibly transfers an adenylyl group from ATP to 4'-phosphopantetheine, yielding dephospho-CoA (dPCoA) and pyrophosphate. This Leuconostoc citreum (strain KM20) protein is Phosphopantetheine adenylyltransferase.